A 333-amino-acid chain; its full sequence is Phenylalanine--tRNA ligase alpha subunit (333 aa).

E254 lines the Mg(2+) pocket.

This sequence belongs to the class-II aminoacyl-tRNA synthetase family. Phe-tRNA synthetase alpha subunit type 1 subfamily. In terms of assembly, tetramer of two alpha and two beta subunits. Requires Mg(2+) as cofactor.

Its subcellular location is the cytoplasm. It carries out the reaction tRNA(Phe) + L-phenylalanine + ATP = L-phenylalanyl-tRNA(Phe) + AMP + diphosphate + H(+). This is Phenylalanine--tRNA ligase alpha subunit from Xylella fastidiosa (strain M23).